We begin with the raw amino-acid sequence, 317 residues long: Melanocyte-stimulating hormone receptor (317 aa).

The Extracellular portion of the chain corresponds to 1 to 37; it reads MPVLGSQRRLLGSLNCTPPATFPLTLAPNRTGPQCLE. The N-linked (GlcNAc...) asparagine glycan is linked to N29. A helical membrane pass occupies residues 38 to 63; sequence VAIPDGLFLSLGLVSLVENVLVVAAI. The Cytoplasmic segment spans residues 64–72; that stretch reads AKNRNLQSP. The helical transmembrane segment at 73 to 93 threads the bilayer; it reads MYYFICCLAMSDLLVSVSNVL. At 94 to 118 the chain is on the extracellular side; that stretch reads ETAVMLLLEAGALAARAAVVQQLDN. A helical transmembrane segment spans residues 119 to 140; it reads VIDVLICGSMVSSLCFLGAIAV. Residues 141–163 lie on the Cytoplasmic side of the membrane; it reads DRYISIFYALRYHSVVTLPRAWR. The chain crosses the membrane as a helical span at residues 164–183; that stretch reads IIAAIWVASILTSLLFITYY. Topologically, residues 184 to 191 are extracellular; that stretch reads NHTVVLLC. Residues 192–211 form a helical membrane-spanning segment; sequence LVGFFIAMLALMAVLYVHML. The Cytoplasmic portion of the chain corresponds to 212–240; that stretch reads ARACQHARGIARLQKRQRPIHQGFGLKGA. Residues 241-266 traverse the membrane as a helical segment; the sequence is ATLTILLGVFFLCWGPFFLHLSLIVL. Residues 267 to 279 lie on the Extracellular side of the membrane; that stretch reads CPQHPTCGCIFKN. The chain crosses the membrane as a helical span at residues 280–300; the sequence is FNLFLALIICNAIVDPLIYAF. Topologically, residues 301–317 are cytoplasmic; the sequence is RSQELRKTLQEVLQCSW. A lipid anchor (S-palmitoyl cysteine) is attached at C315.

It belongs to the G-protein coupled receptor 1 family. As to quaternary structure, interacts with MGRN1, but does not undergo MGRN1-mediated ubiquitination; this interaction competes with GNAS-binding and thus inhibits agonist-induced cAMP production. Interacts with OPN3; the interaction results in a decrease in MC1R-mediated cAMP signaling and ultimately a decrease in melanin production in melanocytes.

It is found in the cell membrane. Functionally, receptor for MSH (alpha, beta and gamma) and ACTH. The activity of this receptor is mediated by G proteins which activate adenylate cyclase. Mediates melanogenesis, the production of eumelanin (black/brown) and phaeomelanin (red/yellow), via regulation of cAMP signaling in melanocytes. This is Melanocyte-stimulating hormone receptor (MC1R) from Cervus elaphus (Red deer).